The following is a 480-amino-acid chain: Gasdermin-C3 (480 aa).

Residues 1-226 form a triggers pyroptosis region; the sequence is MGYSFDRASK…TCVILPSATK (226 aa).

This sequence belongs to the gasdermin family. As to quaternary structure, homooligomer; homooligomeric ring-shaped pore complex containing 27-28 subunits when inserted in the membrane. Cleavage by CASP8 relieves autoinhibition by releasing the N-terminal moiety (Gasdermin-C3, N-terminal) that initiates pyroptosis. Post-translationally, palmitoylated.

The protein resides in the cytoplasm. Its subcellular location is the cytosol. It is found in the cell membrane. With respect to regulation, the full-length protein before cleavage is inactive: intramolecular interactions between N- and C-terminal domains mediate autoinhibition in the absence of activation signal. The intrinsic pyroptosis-inducing activity is carried by the released N-terminal moiety (Gasdermin-C3, N-terminal) following cleavage by caspase CASP8. Its function is as follows. This form constitutes the precursor of the pore-forming protein: upon cleavage, the released N-terminal moiety (Gasdermin-C3, N-terminal) binds to membranes and forms pores, triggering pyroptosis. Pore-forming protein that causes membrane permeabilization and pyroptosis. Produced by the cleavage of gasdermin-C3 by caspase CASP8 in response to death signals. After cleavage, moves to the plasma membrane where it strongly binds to membrane inner leaflet lipids. Homooligomerizes within the membrane and forms pores of 10-15 nanometers (nm) of inner diameter, triggering pyroptosis. The protein is Gasdermin-C3 of Mus musculus (Mouse).